The primary structure comprises 82 residues: Sec-independent protein translocase protein TatA (82 aa).

Residues 1–21 traverse the membrane as a helical segment; it reads MGLSTTHLIIFLVIIVLIFGT.

The protein belongs to the TatA/E family. The Tat system comprises two distinct complexes: a TatABC complex, containing multiple copies of TatA, TatB and TatC subunits, and a separate TatA complex, containing only TatA subunits. Substrates initially bind to the TatABC complex, which probably triggers association of the separate TatA complex to form the active translocon.

The protein resides in the cell inner membrane. In terms of biological role, part of the twin-arginine translocation (Tat) system that transports large folded proteins containing a characteristic twin-arginine motif in their signal peptide across membranes. TatA could form the protein-conducting channel of the Tat system. The sequence is that of Sec-independent protein translocase protein TatA from Leptothrix cholodnii (strain ATCC 51168 / LMG 8142 / SP-6) (Leptothrix discophora (strain SP-6)).